The following is a 427-amino-acid chain: Glutamate-1-semialdehyde 2,1-aminomutase (427 aa).

Lys-265 carries the post-translational modification N6-(pyridoxal phosphate)lysine.

It belongs to the class-III pyridoxal-phosphate-dependent aminotransferase family. HemL subfamily. In terms of assembly, homodimer. Requires pyridoxal 5'-phosphate as cofactor.

It is found in the cytoplasm. The enzyme catalyses (S)-4-amino-5-oxopentanoate = 5-aminolevulinate. It participates in porphyrin-containing compound metabolism; protoporphyrin-IX biosynthesis; 5-aminolevulinate from L-glutamyl-tRNA(Glu): step 2/2. The polypeptide is Glutamate-1-semialdehyde 2,1-aminomutase (Shewanella amazonensis (strain ATCC BAA-1098 / SB2B)).